A 125-amino-acid polypeptide reads, in one-letter code: Small ribosomal subunit protein bS6 (125 aa).

The protein belongs to the bacterial ribosomal protein bS6 family.

Functionally, binds together with bS18 to 16S ribosomal RNA. The sequence is that of Small ribosomal subunit protein bS6 from Campylobacter jejuni subsp. jejuni serotype O:23/36 (strain 81-176).